Reading from the N-terminus, the 288-residue chain is PAK4-inhibitor inka2 (288 aa).

The segment at 159–196 (DPTDWTTSLLTRGRNRQPLVLGDNSFADLIKNWMDLPE) is inka box.

Belongs to the INKA family.

The protein resides in the nucleus. Functionally, inhibitor of the serine/threonine-protein kinase pak4/pak5. Acts by binding pak4/pak5 in a substrate-like manner, inhibiting the protein kinase activity. The polypeptide is PAK4-inhibitor inka2 (Danio rerio (Zebrafish)).